A 308-amino-acid polypeptide reads, in one-letter code: Putative lipid kinase SH2167 (308 aa).

Residues 1–139 form the DAGKc domain; the sequence is MGQKFNHGVL…YDVMKVNGTY (139 aa). ATP is bound by residues S44, 74 to 80, and T101; that span reads GDGTVNE. The Mg(2+) site is built by S220, D223, and K225. The Proton acceptor role is filled by E281.

The protein belongs to the diacylglycerol/lipid kinase family. It depends on Mg(2+) as a cofactor.

Its function is as follows. May catalyze the ATP-dependent phosphorylation of lipids other than diacylglycerol (DAG). The chain is Putative lipid kinase SH2167 from Staphylococcus haemolyticus (strain JCSC1435).